A 399-amino-acid chain; its full sequence is MTRFQRVAVLGSTGSIGDSTLDVIARHPDRLGVYALSAYSRMDKLAAQAAACGAAVVVVPDDAAAARFRAAWRGKAAMPEVRVGPRTLAETAAAPECTTVMAAIVGAAGLPAALAAAQAGKRVLLANKEALVAAGSLFMAAVRENGAELLPIDSEHNAIFQCMPQGARAAAPTAPAPGVRRLLLTASGGPFRRQDPADLHEVTPAQACAHPNWSMGRKISVDSATMLNKGLEVIEAHWLFAMPSERIDVLIHPQSVVHSMVEYDDGSVLAQLGQPDMRTPIAYGLGFPERLASGVGLLDLTRWGRLDFEQPDLQRFPCLALSFAALRAGQPACVALNAANEVAVAAFLEGRLRYTWVARVIEAVLEWQAKQASVTLTSLDDVLDLDARARSFAGNLGLA.

NADPH is bound by residues Thr-13, Gly-14, Ser-15, Ile-16, and Asn-127. Lys-128 provides a ligand contact to 1-deoxy-D-xylulose 5-phosphate. Glu-129 is a binding site for NADPH. Residue Asp-153 coordinates Mn(2+). 1-deoxy-D-xylulose 5-phosphate is bound by residues Ser-154, Glu-155, Ser-187, and His-210. Mn(2+) is bound at residue Glu-155. Gly-216 is an NADPH binding site. Residues Ser-223, Asn-228, Lys-229, and Glu-232 each coordinate 1-deoxy-D-xylulose 5-phosphate. Glu-232 is a binding site for Mn(2+).

It belongs to the DXR family. Mg(2+) serves as cofactor. Mn(2+) is required as a cofactor.

The enzyme catalyses 2-C-methyl-D-erythritol 4-phosphate + NADP(+) = 1-deoxy-D-xylulose 5-phosphate + NADPH + H(+). Its pathway is isoprenoid biosynthesis; isopentenyl diphosphate biosynthesis via DXP pathway; isopentenyl diphosphate from 1-deoxy-D-xylulose 5-phosphate: step 1/6. Catalyzes the NADPH-dependent rearrangement and reduction of 1-deoxy-D-xylulose-5-phosphate (DXP) to 2-C-methyl-D-erythritol 4-phosphate (MEP). The chain is 1-deoxy-D-xylulose 5-phosphate reductoisomerase from Bordetella parapertussis (strain 12822 / ATCC BAA-587 / NCTC 13253).